The sequence spans 151 residues: SsrA-binding protein (151 aa).

The segment at 131–151 (KRESIKEKDWKRDQSRLIRQK) is disordered.

Belongs to the SmpB family.

The protein resides in the cytoplasm. Required for rescue of stalled ribosomes mediated by trans-translation. Binds to transfer-messenger RNA (tmRNA), required for stable association of tmRNA with ribosomes. tmRNA and SmpB together mimic tRNA shape, replacing the anticodon stem-loop with SmpB. tmRNA is encoded by the ssrA gene; the 2 termini fold to resemble tRNA(Ala) and it encodes a 'tag peptide', a short internal open reading frame. During trans-translation Ala-aminoacylated tmRNA acts like a tRNA, entering the A-site of stalled ribosomes, displacing the stalled mRNA. The ribosome then switches to translate the ORF on the tmRNA; the nascent peptide is terminated with the 'tag peptide' encoded by the tmRNA and targeted for degradation. The ribosome is freed to recommence translation, which seems to be the essential function of trans-translation. The chain is SsrA-binding protein from Rickettsia bellii (strain OSU 85-389).